The sequence spans 241 residues: MAPK phosphothreonine lyase (241 aa).

The Proton donor role is filled by histidine 106. Lysine 136 functions as the Proton acceptor in the catalytic mechanism.

This sequence belongs to the phosphothreonine lyase family.

The protein resides in the secreted. Secreted effector that irreversibly inactivates host MAP kinases by catalyzing the dephosphorylation of the phosphothreonine residue in the pT-X-pY motif present in MAPKs, via a beta-elimination reaction leading to a dehydrobutyrine residue. This chain is MAPK phosphothreonine lyase (spvC), found in Salmonella enteritidis.